The primary structure comprises 132 residues: FPRL1 inhibitory protein (132 aa).

The first 28 residues, 1-28, serve as a signal peptide directing secretion; the sequence is MKKNITKVIIASTVIATGLLTQTNDAKA.

Belongs to the CHIPS/FLIPr family.

It localises to the secreted. In terms of biological role, may be involved in countering the first line of host defense mechanisms. Impairs the leukocyte response to FPRL1 agonists by binding directly to host FPRL1. In Staphylococcus aureus (strain MW2), this protein is FPRL1 inhibitory protein (flr).